We begin with the raw amino-acid sequence, 82 residues long: Sulfur carrier protein TusA (82 aa).

The active-site Cysteine persulfide intermediate is C19.

Belongs to the sulfur carrier protein TusA family.

It localises to the cytoplasm. In terms of biological role, sulfur carrier protein which probably makes part of a sulfur-relay system. The sequence is that of Sulfur carrier protein TusA from Photobacterium profundum (strain SS9).